The following is a 115-amino-acid chain: Small ribosomal subunit protein uS14m (115 aa).

Belongs to the universal ribosomal protein uS14 family. In terms of assembly, component of the mitochondrial small ribosomal subunit (mt-SSU). Mature yeast 74S mitochondrial ribosomes consist of a small (37S) and a large (54S) subunit. The 37S small subunit contains a 15S ribosomal RNA (15S mt-rRNA) and 34 different proteins. The 54S large subunit contains a 21S rRNA (21S mt-rRNA) and 46 different proteins.

The protein localises to the mitochondrion. Component of the mitochondrial ribosome (mitoribosome), a dedicated translation machinery responsible for the synthesis of mitochondrial genome-encoded proteins, including at least some of the essential transmembrane subunits of the mitochondrial respiratory chain. The mitoribosomes are attached to the mitochondrial inner membrane and translation products are cotranslationally integrated into the membrane. The protein is Small ribosomal subunit protein uS14m (MRP2) of Saccharomyces cerevisiae (strain ATCC 204508 / S288c) (Baker's yeast).